We begin with the raw amino-acid sequence, 225 residues long: NAD(P)H-quinone oxidoreductase subunit K, chloroplastic (225 aa).

[4Fe-4S] cluster is bound by residues Cys43, Cys44, Cys108, and Cys139.

This sequence belongs to the complex I 20 kDa subunit family. NDH is composed of at least 16 different subunits, 5 of which are encoded in the nucleus. Requires [4Fe-4S] cluster as cofactor.

The protein resides in the plastid. The protein localises to the chloroplast thylakoid membrane. It catalyses the reaction a plastoquinone + NADH + (n+1) H(+)(in) = a plastoquinol + NAD(+) + n H(+)(out). The catalysed reaction is a plastoquinone + NADPH + (n+1) H(+)(in) = a plastoquinol + NADP(+) + n H(+)(out). NDH shuttles electrons from NAD(P)H:plastoquinone, via FMN and iron-sulfur (Fe-S) centers, to quinones in the photosynthetic chain and possibly in a chloroplast respiratory chain. The immediate electron acceptor for the enzyme in this species is believed to be plastoquinone. Couples the redox reaction to proton translocation, and thus conserves the redox energy in a proton gradient. This Nuphar advena (Common spatterdock) protein is NAD(P)H-quinone oxidoreductase subunit K, chloroplastic.